The primary structure comprises 121 residues: Large ribosomal subunit protein bL20 (121 aa).

This sequence belongs to the bacterial ribosomal protein bL20 family.

Binds directly to 23S ribosomal RNA and is necessary for the in vitro assembly process of the 50S ribosomal subunit. It is not involved in the protein synthesizing functions of that subunit. The protein is Large ribosomal subunit protein bL20 of Methylorubrum extorquens (strain PA1) (Methylobacterium extorquens).